The following is a 472-amino-acid chain: ATP-dependent rRNA helicase rrp3 (472 aa).

Residues methionine 1 to lysine 52 form a disordered region. Basic and acidic residues predominate over residues alanine 10–alanine 24. The Q motif signature appears at lysine 52–alanine 80. A Helicase ATP-binding domain is found at isoleucine 83–valine 254. Alanine 96–threonine 103 serves as a coordination point for ATP. A DEAD box motif is present at residues aspartate 202–aspartate 205. Positions tyrosine 282 to methionine 426 constitute a Helicase C-terminal domain. Positions methionine 443–glycine 472 are disordered. The span at serine 452–arginine 462 shows a compositional bias: basic residues.

It belongs to the DEAD box helicase family. DDX47/RRP3 subfamily. In terms of assembly, interacts with the SSU processome.

It is found in the nucleus. It carries out the reaction ATP + H2O = ADP + phosphate + H(+). Functionally, ATP-dependent rRNA helicase required for pre-ribosomal RNA processing. Involved in the maturation of the 35S-pre-rRNA and to its cleavage to mature 18S rRNA. The polypeptide is ATP-dependent rRNA helicase rrp3 (Aspergillus oryzae (strain ATCC 42149 / RIB 40) (Yellow koji mold)).